We begin with the raw amino-acid sequence, 199 residues long: Thymidine kinase (199 aa).

ATP is bound by residues 23–30 and 95–98; these read GSMFSGKT and DEAQ. Glutamate 96 acts as the Proton acceptor in catalysis. Zn(2+) contacts are provided by cysteine 152, cysteine 155, cysteine 184, and cysteine 187.

This sequence belongs to the thymidine kinase family. In terms of assembly, homotetramer.

It is found in the cytoplasm. It catalyses the reaction thymidine + ATP = dTMP + ADP + H(+). The polypeptide is Thymidine kinase (Bacteroides fragilis (strain YCH46)).